Here is a 130-residue protein sequence, read N- to C-terminus: Large ribosomal subunit protein bL21 (130 aa).

A disordered region spans residues 110-130; that stretch reads KTAAQPAADEAVAANEVDSEA. Residues 112 to 130 show a composition bias toward low complexity; the sequence is AAQPAADEAVAANEVDSEA.

It belongs to the bacterial ribosomal protein bL21 family. As to quaternary structure, part of the 50S ribosomal subunit. Contacts protein L20.

Its function is as follows. This protein binds to 23S rRNA in the presence of protein L20. This chain is Large ribosomal subunit protein bL21, found in Cyanothece sp. (strain PCC 7425 / ATCC 29141).